The chain runs to 946 residues: Protein dct-6 (946 aa).

The stretch at 326-363 (YMDMNDQIEQMIALLVDQLEELEKLEQLCDEVQKTGNQ) forms a coiled coil.

Functionally, may have a role in tumor suppression. In Caenorhabditis briggsae, this protein is Protein dct-6.